We begin with the raw amino-acid sequence, 255 residues long: EEF1A lysine methyltransferase 4 (255 aa).

S-adenosyl-L-methionine is bound by residues tryptophan 26 and tyrosine 30. Tyrosine 39 carries the phosphotyrosine modification. S-adenosyl-L-methionine is bound by residues tryptophan 41, glycine 66, 88-89 (DY), 113-114 (DV), and lysine 130. A Required for methyltransferase activity motif is present at residues 129 to 134 (EKGTLD).

The protein belongs to the methyltransferase superfamily.

It catalyses the reaction L-lysyl-[protein] + S-adenosyl-L-methionine = N(6)-methyl-L-lysyl-[protein] + S-adenosyl-L-homocysteine + H(+). It carries out the reaction N(6)-methyl-L-lysyl-[protein] + S-adenosyl-L-methionine = N(6),N(6)-dimethyl-L-lysyl-[protein] + S-adenosyl-L-homocysteine + H(+). The enzyme catalyses N(6),N(6)-dimethyl-L-lysyl-[protein] + S-adenosyl-L-methionine = N(6),N(6),N(6)-trimethyl-L-lysyl-[protein] + S-adenosyl-L-homocysteine + H(+). Protein-lysine methyltransferase that efficiently catalyzes three successive methylations on 'Lys-36' in eukaryotic translation elongation factor 1 alpha (EEF1A1 or EEF1A2). This Bos taurus (Bovine) protein is EEF1A lysine methyltransferase 4.